Consider the following 315-residue polypeptide: Replication factor C small subunit (315 aa).

ATP is bound at residue 43-50; the sequence is GSPGVGKT.

The protein belongs to the activator 1 small subunits family. RfcS subfamily. Heteromultimer composed of small subunits (RfcS) and large subunits (RfcL).

In terms of biological role, part of the RFC clamp loader complex which loads the PCNA sliding clamp onto DNA. The protein is Replication factor C small subunit of Methanococcus maripaludis (strain C6 / ATCC BAA-1332).